Reading from the N-terminus, the 495-residue chain is Glycerol kinase (495 aa).

T14 contributes to the ADP binding site. ATP is bound by residues T14, T15, and S16. T14 is a sn-glycerol 3-phosphate binding site. ADP is bound at residue R18. Residues R84, E85, Y136, and D246 each contribute to the sn-glycerol 3-phosphate site. Residues R84, E85, Y136, D246, and Q247 each contribute to the glycerol site. T268 and G312 together coordinate ADP. 4 residues coordinate ATP: T268, G312, Q316, and G413. 2 residues coordinate ADP: G413 and N417.

The protein belongs to the FGGY kinase family.

It catalyses the reaction glycerol + ATP = sn-glycerol 3-phosphate + ADP + H(+). The protein operates within polyol metabolism; glycerol degradation via glycerol kinase pathway; sn-glycerol 3-phosphate from glycerol: step 1/1. With respect to regulation, inhibited by fructose 1,6-bisphosphate (FBP). Key enzyme in the regulation of glycerol uptake and metabolism. Catalyzes the phosphorylation of glycerol to yield sn-glycerol 3-phosphate. The polypeptide is Glycerol kinase (Bdellovibrio bacteriovorus (strain ATCC 15356 / DSM 50701 / NCIMB 9529 / HD100)).